Here is a 291-residue protein sequence, read N- to C-terminus: Elongation factor Ts (291 aa).

Residues Thr-81–Val-84 form an involved in Mg(2+) ion dislocation from EF-Tu region. Positions Glu-271–Ser-291 are disordered.

This sequence belongs to the EF-Ts family.

It is found in the cytoplasm. Its function is as follows. Associates with the EF-Tu.GDP complex and induces the exchange of GDP to GTP. It remains bound to the aminoacyl-tRNA.EF-Tu.GTP complex up to the GTP hydrolysis stage on the ribosome. The protein is Elongation factor Ts of Halorhodospira halophila (strain DSM 244 / SL1) (Ectothiorhodospira halophila (strain DSM 244 / SL1)).